The sequence spans 316 residues: Nucleotide-binding protein NFA_35930 (316 aa).

32-39 (GLSGAGRG) contacts ATP. Residue 83 to 86 (DVRS) participates in GTP binding.

This sequence belongs to the RapZ-like family.

Displays ATPase and GTPase activities. The sequence is that of Nucleotide-binding protein NFA_35930 from Nocardia farcinica (strain IFM 10152).